Here is a 1454-residue protein sequence, read N- to C-terminus: ABC transporter G family member 43 (1454 aa).

Residues 23-47 (ARSLRDGDDPFRRSAAASRRDAGDD) form a disordered region. The segment covering 25 to 44 (SLRDGDDPFRRSAAASRRDA) has biased composition (basic and acidic residues). N-linked (GlcNAc...) asparagine glycosylation is present at N163. In terms of domain architecture, ABC transporter 1 spans 170-444 (EGLVSLFISS…FESAGFRCPE (275 aa)). Residue 204-211 (GPPSSGKS) participates in ATP binding. N-linked (GlcNAc...) asparagine glycosylation occurs at N393. Residues 524 to 735 (LKAVMSREWL…SNNALSVNEF (212 aa)) form the ABC transmembrane type-2 1 domain. 6 helical membrane-spanning segments follow: residues 540–560 (FLFI…MTLF), 577–597 (VGAL…ELQL), 613–630 (FFPA…KVPL), 637–656 (LWIV…GRFF), 659–679 (FLAY…LGAI), and 684–704 (VVAN…GGFL). Residue N745 is glycosylated (N-linked (GlcNAc...) asparagine). Residues 775-795 (IGAMIGFMIVFNILYLCALTF) traverse the membrane as a helical segment. A disordered region spans residues 804-823 (TVVSDDDTKSELEAESNQEQ). N-linked (GlcNAc...) asparagine glycans are attached at residues N829 and N832. An ABC transporter 2 domain is found at 852–1104 (LSFNHMNYYV…ILVEYFEAIP (253 aa)). An ATP-binding site is contributed by 897-904 (GVSGAGKT). N951 carries N-linked (GlcNAc...) asparagine glycosylation. Residues 1178–1391 (QCVANTWKQF…TIYGVIASQF (214 aa)) enclose the ABC transmembrane type-2 2 domain. The next 7 helical transmembrane spans lie at 1196–1216 (YNAM…TVFW), 1236–1256 (YAAV…VVSV), 1284–1304 (FCYS…MIGY), 1314–1334 (FLFF…MLVA), 1341–1361 (LAAV…GFII), 1372–1392 (WFYW…SQFA), and 1423–1443 (FLGY…FLFG).

This sequence belongs to the ABC transporter superfamily. ABCG family. PDR (TC 3.A.1.205) subfamily. As to expression, specifically expressed in the vasculature of roots, stems, panicles, sheaths and leaves.

The protein resides in the cell membrane. Functionally, ABC transporter modulating cadmium (Cd) import, thus controlling Cd(2+) accumulation to prevent phytotoxicity. Confers high tolerance to Cd in yeast. Prevents leaf bacteria proliferation, such as Xanthomonas oryzae pv. oryzicola (Xoc) RS105 and X.oryzae pv. oryzae (Xoo) PXO99, by triggering Cd accumulation, which in turn impairs bacterial virulence factors. The polypeptide is ABC transporter G family member 43 (Oryza sativa subsp. japonica (Rice)).